The primary structure comprises 164 residues: Interferon gamma (164 aa).

The signal sequence occupies residues 1-19 (MTCQTYNLFVLSVIMIYYG). N-linked (GlcNAc...) asparagine glycosylation is found at Asn-42 and Asn-61.

The protein belongs to the type II (or gamma) interferon family. In terms of assembly, homodimer.

The protein resides in the secreted. Its function is as follows. Produced by lymphocytes activated by specific antigens or mitogens. IFN-gamma, in addition to having antiviral activity, has important immunoregulatory functions. It is a potent activator of macrophages, it has antiproliferative effects on transformed cells and it can potentiate the antiviral and antitumor effects of the type I interferons. The protein is Interferon gamma (IFNG) of Gallus gallus (Chicken).